The following is a 318-amino-acid chain: Ribose-phosphate pyrophosphokinase (318 aa).

ATP-binding positions include 46 to 48 (DGE) and 105 to 106 (RQ). Mg(2+) is bound by residues His-139 and Asp-178. Lys-201 is an active-site residue. D-ribose 5-phosphate is bound by residues Arg-203, Asp-227, and 231 to 235 (DTAGT).

It belongs to the ribose-phosphate pyrophosphokinase family. Class I subfamily. As to quaternary structure, homohexamer. It depends on Mg(2+) as a cofactor.

Its subcellular location is the cytoplasm. The catalysed reaction is D-ribose 5-phosphate + ATP = 5-phospho-alpha-D-ribose 1-diphosphate + AMP + H(+). It functions in the pathway metabolic intermediate biosynthesis; 5-phospho-alpha-D-ribose 1-diphosphate biosynthesis; 5-phospho-alpha-D-ribose 1-diphosphate from D-ribose 5-phosphate (route I): step 1/1. Its function is as follows. Involved in the biosynthesis of the central metabolite phospho-alpha-D-ribosyl-1-pyrophosphate (PRPP) via the transfer of pyrophosphoryl group from ATP to 1-hydroxyl of ribose-5-phosphate (Rib-5-P). The polypeptide is Ribose-phosphate pyrophosphokinase (Helicobacter pylori (strain ATCC 700392 / 26695) (Campylobacter pylori)).